Here is a 146-residue protein sequence, read N- to C-terminus: PTS system fructose-specific EIIA component (146 aa).

The PTS EIIA type-4 domain occupies 1 to 124 (MISVIISGHG…NLKAMSQQSF (124 aa)). H9 functions as the Tele-phosphohistidine intermediate in the catalytic mechanism. Residue H9 is modified to Phosphohistidine; by HPr.

The protein localises to the cytoplasm. Functionally, the phosphoenolpyruvate-dependent sugar phosphotransferase system (sugar PTS), a major carbohydrate active transport system, catalyzes the phosphorylation of incoming sugar substrates concomitantly with their translocation across the cell membrane. The enzyme II LevDE PTS system is involved in fructose transport. Its function is as follows. LevD and LevE act as negative regulators of the levanase operon. They may be involved in a PTS-mediated phosphorylation of a regulator. The polypeptide is PTS system fructose-specific EIIA component (Bacillus subtilis (strain 168)).